We begin with the raw amino-acid sequence, 274 residues long: Diaminopimelate epimerase (274 aa).

Substrate contacts are provided by Asn11, Gln44, and Asn64. The active-site Proton donor is Cys73. Residues 74–75, Asn157, Asn190, and 208–209 each bind substrate; these read GN and ER. Residue Cys217 is the Proton acceptor of the active site. Position 218-219 (218-219) interacts with substrate; that stretch reads GS.

It belongs to the diaminopimelate epimerase family. In terms of assembly, homodimer.

The protein localises to the cytoplasm. The catalysed reaction is (2S,6S)-2,6-diaminopimelate = meso-2,6-diaminopimelate. Its pathway is amino-acid biosynthesis; L-lysine biosynthesis via DAP pathway; DL-2,6-diaminopimelate from LL-2,6-diaminopimelate: step 1/1. Functionally, catalyzes the stereoinversion of LL-2,6-diaminopimelate (L,L-DAP) to meso-diaminopimelate (meso-DAP), a precursor of L-lysine and an essential component of the bacterial peptidoglycan. The protein is Diaminopimelate epimerase of Pectobacterium carotovorum subsp. carotovorum (strain PC1).